The following is a 149-amino-acid chain: Hydroalkoxylation enzyme phnH (149 aa).

Positions 1–18 (MKFTYLVSLAAFAVTALG) are cleaved as a signal peptide. Asn33 and Asn127 each carry an N-linked (GlcNAc...) asparagine glycan.

In terms of assembly, homotetramer.

It carries out the reaction 2,4,7,9-tetrahydroxy-6-methyl-8-(2-methylbut-3-en-2-yl)-1-oxo-1H-phenalen-3-ol = (2'R)-atrovenetin. Its pathway is secondary metabolite biosynthesis. Hydroalkoxylation enzyme; part of the gene cluster that mediates the biosynthesis of phenalenones such as herqueinone, compounds that have been reported to treat tumors, bacterial infections and/or mycoses, and rheumatic diseases. The non-reducing polyketide synthase phnA synthesizes the heptaketide backbone and cyclizes it into the angular, hemiketal-containing naphtho-gamma-pyrone prephenalenone. The product template (PT) domain of phnA catalyzes only the C4-C9 aldol condensation, which is unprecedented among known PT domains. The transformation of prephenalenone to phenalenones requires an FAD-dependent monooxygenase phnB, which catalyzes the C2 aromatic hydroxylation of prephenalenone and ring opening of the gamma-pyrone ring simultaneously. Subsequent intramolecular deprotonation of C3 phenolic oxygen accelerates phenalenone ring closure to yield the tricyclic phenalenone core with a C2 hydroxylation. The prenyltransferase phnF further catalyzes reverse C-prenylation of phenalenone by direct electrophilic substitution at C6, or possibly via first a forward O-prenylation of a neighboring phenol in phenalenone, followed by a Claisen rearrangement. The hydroalkoxylation enzyme phnH catalyzes the 5-exo-trig cyclization via acid catalysis after the spontaneous deprotonation of 7-OH, which leads to the formation of the dihydrobenzofuran atrovenetin. Atrovenetin is further converted to deoxyherqueinone by the O-methyltransferase phnC which can methylate C2-OH to stabilize the northern portion of the phenalenone core. Finally, the oxidoreductase phnG converts deoxyherqueinone to herqueinone via C6 hydroxylation. In Penicillium herquei, this protein is Hydroalkoxylation enzyme phnH.